The following is a 391-amino-acid chain: Na(+)/H(+) antiporter NhaA (391 aa).

11 helical membrane-spanning segments follow: residues 14-34 (GGIILIIAAAAAMVFANLGAT), 59-79 (MLLWINDALMAVFFLLVGLEV), 95-115 (AFPVIAAIGGMVVPALLYLAF), 125-145 (GWAIPAATDIAFALGVLALLG), 154-174 (IFLMALAIIDDLGAIVIIALF), 180-200 (SILSLSVAAGAIAALALLNIF), 219-239 (VLKSGVHATLAGVIIGFFIPL), 254-274 (VLHPWVAFMILPLFAFANAGV), 292-312 (IIAGLFIGKPLGISLFCWLAL), 328-348 (IMAVGVLCGIGFTMSIFISTL), and 357-377 (LIVWAKLGILTGSLLAAFVGY).

Belongs to the NhaA Na(+)/H(+) (TC 2.A.33) antiporter family.

The protein resides in the cell inner membrane. The catalysed reaction is Na(+)(in) + 2 H(+)(out) = Na(+)(out) + 2 H(+)(in). Its function is as follows. Na(+)/H(+) antiporter that extrudes sodium in exchange for external protons. This Enterobacter sp. (strain 638) protein is Na(+)/H(+) antiporter NhaA.